Reading from the N-terminus, the 197-residue chain is MAERKASVERDTLETQIKASINLDGTGKARFDIGVPFLEHMLDQIARHGLIDLDIVSKGDLHIDDHHTVEDVGITLGQAFAKAIGDKKGIRRYGHAYVPLDEALSRVVIDFSGRPGLQMHVPYTRATVGGFDVDLFQEFFQGFVNHALVSLHIDNLRGTNTHHQIETVFKAFGRALRMAVELDDRMAGQMPSTKGVL.

This sequence belongs to the imidazoleglycerol-phosphate dehydratase family.

The protein localises to the cytoplasm. It catalyses the reaction D-erythro-1-(imidazol-4-yl)glycerol 3-phosphate = 3-(imidazol-4-yl)-2-oxopropyl phosphate + H2O. It participates in amino-acid biosynthesis; L-histidine biosynthesis; L-histidine from 5-phospho-alpha-D-ribose 1-diphosphate: step 6/9. This chain is Imidazoleglycerol-phosphate dehydratase, found in Pseudomonas fluorescens (strain SBW25).